A 483-amino-acid chain; its full sequence is Zinc metalloproteinase/disintegrin (483 aa).

A signal peptide spans 1-20; that stretch reads MIQVLLVTICLAVFPYQGSS. Positions 21–190 are excised as a propeptide; it reads IILESGNVND…KASQLYLTPE (170 aa). One can recognise a Peptidase M12B domain in the interval 197-395; it reads RYIELAIVVD…RNPQCILNAP (199 aa). Residue Glu-200 coordinates Ca(2+). N-linked (GlcNAc...) asparagine glycosylation is present at Asn-263. Asp-284 contributes to the Ca(2+) binding site. Residue Asn-293 is glycosylated (N-linked (GlcNAc...) asparagine). 3 disulfide bridges follow: Cys-308–Cys-390, Cys-352–Cys-374, and Cys-354–Cys-357. His-333 provides a ligand contact to Zn(2+). Glu-334 is a catalytic residue. Zn(2+) is bound by residues His-337 and His-343. Ca(2+) contacts are provided by Cys-390 and Asn-393. A propeptide spanning residues 396–413 is cleaved from the precursor; sequence LRTDTVSTPVSGNEFLEA. The region spanning 403–483 is the Disintegrin domain; the sequence is TPVSGNEFLE…SNDCPRWNDL (81 aa). Cystine bridges form between Cys-417-Cys-432, Cys-419-Cys-427, Cys-426-Cys-449, Cys-440-Cys-446, Cys-445-Cys-470, and Cys-458-Cys-477. The Cell attachment site motif lies at 462-464; sequence RGD.

This sequence belongs to the venom metalloproteinase (M12B) family. P-II subfamily. P-IIa sub-subfamily. As to quaternary structure, monomeric (disintegrin). Requires Zn(2+) as cofactor. As to expression, expressed by the venom gland.

The protein localises to the secreted. Impairs hemostasis in the envenomed animal. In terms of biological role, inhibits platelet aggregation induced by ADP, thrombin, platelet-activating factor and collagen. Acts by inhibiting fibrinogen interaction with platelet receptors GPIIb/GPIIIa (ITGA2B/ITGB3). This is Zinc metalloproteinase/disintegrin from Protobothrops flavoviridis (Habu).